The sequence spans 258 residues: Beta carbonic anhydrase 3 (258 aa).

A signal peptide spans 1–28 (MSTESYEDAIKRLGELLSKKSDLGNVAA). Residues 24–54 (GNVAAAKIKKLTDELEELDSNKLDAVERIKS) are a coiled coil. Position 35 is a phosphothreonine (Thr-35). Position 95 is a phosphoserine (Ser-95). S-nitrosocysteine is present on Cys-201.

Belongs to the beta-class carbonic anhydrase family. Strongly expressed in aerial tissues including leaves, stems, flowers and siliques, and, to a lower extent, in roots.

It localises to the cytoplasm. The protein resides in the cytosol. The enzyme catalyses hydrogencarbonate + H(+) = CO2 + H2O. Its function is as follows. Reversible hydration of carbon dioxide. This chain is Beta carbonic anhydrase 3 (BCA3), found in Arabidopsis thaliana (Mouse-ear cress).